The primary structure comprises 107 residues: Replication initiation control protein YabA (107 aa).

Positions 81, 83, 97, and 100 each coordinate Zn(2+).

The protein belongs to the YabA family. As to quaternary structure, homotetramer. Interacts with both DnaA and DnaN, acting as a bridge between these two proteins. It depends on Zn(2+) as a cofactor.

It is found in the cytoplasm. The protein resides in the nucleoid. Functionally, involved in control of chromosome replication initiation. Inhibits the cooperative binding of DnaA to the oriC region, thus negatively regulating initiation of chromosome replication. Inhibits the ability of DnaA-ATP to form a helix on DNA; does not disassemble preformed DnaA-DNA helices. Decreases the residence time of DnaA on the chromosome at its binding sites (oriC, replication forks and promoter-binding sites). Tethers DnaA to the replication machinery via the DNA polymerase beta sliding clamp subunit (dnaN). Associates with oriC and other DnaA targets on the chromosome in a DnaA-dependent manner. The sequence is that of Replication initiation control protein YabA from Streptococcus equi subsp. zooepidemicus (strain MGCS10565).